A 431-amino-acid chain; its full sequence is IMP-specific 5'-nucleotidase 1 (431 aa).

Residue K117 coordinates ATP. The active-site Nucleophile is the D157. IMP contacts are provided by D157, D159, D165, T193, D349, and K357. The Mg(2+) site is built by D157 and D159. Catalysis depends on D159, which acts as the Proton donor. D388 provides a ligand contact to Mg(2+).

The protein belongs to the ISN1 family. Homotetramer. It depends on Mg(2+) as a cofactor.

It catalyses the reaction IMP + H2O = inosine + phosphate. Its activity is regulated as follows. Allosterically activated by ATP. ATP binding is a prerequisite to magnesium and substrate binding. ATP binds to 2 of the subunits in the homotetramer inducing a closure of these 2 subunits and the release of the C-terminal loop, thereby activating the enzyme. Functionally, IMP-specific 5'-nucleotidase involved in IMP (inositol monophosphate) degradation. The sequence is that of IMP-specific 5'-nucleotidase 1 (isn-1) from Neurospora crassa (strain ATCC 24698 / 74-OR23-1A / CBS 708.71 / DSM 1257 / FGSC 987).